Here is a 156-residue protein sequence, read N- to C-terminus: Arginine repressor (156 aa).

The protein belongs to the ArgR family.

The protein localises to the cytoplasm. Its pathway is amino-acid biosynthesis; L-arginine biosynthesis [regulation]. Functionally, regulates arginine biosynthesis genes. The sequence is that of Arginine repressor from Photobacterium profundum (strain SS9).